The sequence spans 69 residues: UPF0337 protein YjbJ (69 aa).

Belongs to the UPF0337 (CsbD) family.

In Escherichia coli O157:H7, this protein is UPF0337 protein YjbJ (yjbJ).